The chain runs to 107 residues: Large ribosomal subunit protein uL24 (107 aa).

It belongs to the universal ribosomal protein uL24 family. In terms of assembly, part of the 50S ribosomal subunit.

One of two assembly initiator proteins, it binds directly to the 5'-end of the 23S rRNA, where it nucleates assembly of the 50S subunit. Functionally, one of the proteins that surrounds the polypeptide exit tunnel on the outside of the subunit. This chain is Large ribosomal subunit protein uL24, found in Coxiella burnetii (strain Dugway 5J108-111).